The chain runs to 432 residues: Adenylosuccinate synthetase (432 aa).

Residues 13-19 (GDEGKGK) and 41-43 (GHT) contribute to the GTP site. The active-site Proton acceptor is the Asp14. Mg(2+) is bound by residues Asp14 and Gly41. IMP is bound by residues 14 to 17 (DEGK), 39 to 42 (NAGH), Thr130, Arg144, Gln225, Thr240, and Arg304. His42 (proton donor) is an active-site residue. Residue 300-306 (ATTGRRR) coordinates substrate. GTP is bound by residues Arg306, 332 to 334 (KLD), and 415 to 417 (STG).

Belongs to the adenylosuccinate synthetase family. Homodimer. Mg(2+) serves as cofactor.

The protein localises to the cytoplasm. It catalyses the reaction IMP + L-aspartate + GTP = N(6)-(1,2-dicarboxyethyl)-AMP + GDP + phosphate + 2 H(+). It participates in purine metabolism; AMP biosynthesis via de novo pathway; AMP from IMP: step 1/2. Its function is as follows. Plays an important role in the de novo pathway of purine nucleotide biosynthesis. Catalyzes the first committed step in the biosynthesis of AMP from IMP. In Shigella sonnei (strain Ss046), this protein is Adenylosuccinate synthetase.